The sequence spans 927 residues: Protein unc-45 homolog B (927 aa).

TPR repeat units follow at residues 4-37 (PVQLKEEGNKYFQSNEYGQAIQCYSKALKLITDK), 41-74 (AVLYRNRSACYLKQDNYVQAAADASKAIDVDASD), and 76-108 (KALFRRCQALEKLGKLDQAYKDVQRCATLEPKN). ARM repeat units follow at residues 167–206 (DAGAEQIFQNNGVNLLMQLIESKDPEMILSAIRTLSGMCT), 209–248 (RARATAIVHLVGINKICSIMAVDNEEIALAACNLLQNIVD), and 746–785 (DKLRQKIIKEKALPEIENYMFENHEQIRQAATECMCNLAL).

In terms of tissue distribution, detected initially throughout the somites and the heart and gradually also expressed in the jaw, branchial arches and body wall muscles at later embryonic stages.

The protein localises to the cytoplasm. Its subcellular location is the myofibril. The protein resides in the sarcomere. It localises to the z line. It is found in the a band. The protein localises to the perinuclear region. Its subcellular location is the cytosol. Acts as a co-chaperone for HSP90 and is required for proper folding of the myosin motor domain. Plays a role in sarcomere formation during muscle cell development. Is necessary for normal early lens development. This is Protein unc-45 homolog B from Xenopus tropicalis (Western clawed frog).